Here is a 367-residue protein sequence, read N- to C-terminus: Probable dual-specificity RNA methyltransferase RlmN (367 aa).

Catalysis depends on glutamate 92, which acts as the Proton acceptor. Residues 98 to 326 (QEYGLSVCVT…YDTLKKNGIN (229 aa)) enclose the Radical SAM core domain. An intrachain disulfide couples cysteine 105 to cysteine 341. [4Fe-4S] cluster contacts are provided by cysteine 112, cysteine 116, and cysteine 119. Residues 164-165 (GE), serine 196, 219-221 (SLH), and asparagine 297 contribute to the S-adenosyl-L-methionine site. The S-methylcysteine intermediate role is filled by cysteine 341.

The protein belongs to the radical SAM superfamily. RlmN family. [4Fe-4S] cluster serves as cofactor.

It localises to the cytoplasm. It catalyses the reaction adenosine(2503) in 23S rRNA + 2 reduced [2Fe-2S]-[ferredoxin] + 2 S-adenosyl-L-methionine = 2-methyladenosine(2503) in 23S rRNA + 5'-deoxyadenosine + L-methionine + 2 oxidized [2Fe-2S]-[ferredoxin] + S-adenosyl-L-homocysteine. It carries out the reaction adenosine(37) in tRNA + 2 reduced [2Fe-2S]-[ferredoxin] + 2 S-adenosyl-L-methionine = 2-methyladenosine(37) in tRNA + 5'-deoxyadenosine + L-methionine + 2 oxidized [2Fe-2S]-[ferredoxin] + S-adenosyl-L-homocysteine. Its function is as follows. Specifically methylates position 2 of adenine 2503 in 23S rRNA and position 2 of adenine 37 in tRNAs. The protein is Probable dual-specificity RNA methyltransferase RlmN of Listeria innocua serovar 6a (strain ATCC BAA-680 / CLIP 11262).